Reading from the N-terminus, the 117-residue chain is Protein P16 (117 aa).

The chain crosses the membrane as a helical span at residues 7–24 (LYWVGGGLVLILIWLWFR).

The protein localises to the virion membrane. In terms of biological role, protein of the infection vertex complex, which increases the vertex stability. Anchors the vertex structure to the viral membrane. Essential for viral infectivity. This chain is Protein P16 (XVI), found in Enterobacteria phage PRD1 (Bacteriophage PRD1).